We begin with the raw amino-acid sequence, 400 residues long: Snake venom metalloproteinase H3 (400 aa).

The N-terminal stretch at 1–6 (FPYQGS) is a signal peptide. Residues 7-176 (SIILESGNVN…KKASQLIVST (170 aa)) constitute a propeptide that is removed on maturation. The Peptidase M12B domain maps to 180–377 (KYMEIVIVVD…ENPPCILNKP (198 aa)). Residues Glu-183 and Asp-267 each coordinate Ca(2+). Cystine bridges form between Cys-291-Cys-372, Cys-331-Cys-356, and Cys-333-Cys-339. Residue His-316 participates in Zn(2+) binding. The active site involves Glu-317. Zn(2+)-binding residues include His-320 and His-326. Positions 372, 375, 387, 390, 392, 394, and 400 each coordinate Ca(2+). Positions 378 to 400 (LRTDTVSTPVSGNELLEAGKDYD) are excised as a propeptide.

Belongs to the venom metalloproteinase (M12B) family. P-I subfamily. Monomer. The cofactor is Zn(2+). Expressed by the venom gland.

Its subcellular location is the secreted. Functionally, snake venom metalloproteinase that impairs hemostasis in the envenomed animal. This is Snake venom metalloproteinase H3 from Deinagkistrodon acutus (Hundred-pace snake).